The chain runs to 545 residues: Eukaryotic translation initiation factor 3 subunit D-2 (545 aa).

The span at 99–113 (FRGNIRNNPRTRGRT) shows a compositional bias: basic residues. The interval 99–158 (FRGNIRNNPRTRGRTGRGGAVTGIGGNQPGVGVNERTKYGKGRDNRRQMGRRFGRNAPTR) is disordered. The segment covering 114–127 (GRGGAVTGIGGNQP) has biased composition (gly residues). The span at 133 to 145 (ERTKYGKGRDNRR) shows a compositional bias: basic and acidic residues. Positions 287 to 301 (QFDLLTVNETALEPP) are RNA gate.

The protein belongs to the eIF-3 subunit D family. Component of the eukaryotic translation initiation factor 3 (eIF-3) complex. The eIF-3 complex interacts with pix.

It localises to the cytoplasm. MRNA cap-binding component of the eukaryotic translation initiation factor 3 (eIF-3) complex, which is involved in protein synthesis of a specialized repertoire of mRNAs and, together with other initiation factors, stimulates binding of mRNA and methionyl-tRNAi to the 40S ribosome. The eIF-3 complex specifically targets and initiates translation of a subset of mRNAs involved in cell proliferation. In the eIF-3 complex, eif3d specifically recognizes and binds the 7-methylguanosine cap of a subset of mRNAs. In Drosophila persimilis (Fruit fly), this protein is Eukaryotic translation initiation factor 3 subunit D-2.